A 162-amino-acid chain; its full sequence is ATP synthase subunit b (162 aa).

Residues 8–28 (LTGIIQLLNFLILLFVLYKFL) traverse the membrane as a helical segment.

Belongs to the ATPase B chain family. F-type ATPases have 2 components, F(1) - the catalytic core - and F(0) - the membrane proton channel. F(1) has five subunits: alpha(3), beta(3), gamma(1), delta(1), epsilon(1). F(0) has three main subunits: a(1), b(2) and c(10-14). The alpha and beta chains form an alternating ring which encloses part of the gamma chain. F(1) is attached to F(0) by a central stalk formed by the gamma and epsilon chains, while a peripheral stalk is formed by the delta and b chains.

The protein resides in the cell inner membrane. Functionally, f(1)F(0) ATP synthase produces ATP from ADP in the presence of a proton or sodium gradient. F-type ATPases consist of two structural domains, F(1) containing the extramembraneous catalytic core and F(0) containing the membrane proton channel, linked together by a central stalk and a peripheral stalk. During catalysis, ATP synthesis in the catalytic domain of F(1) is coupled via a rotary mechanism of the central stalk subunits to proton translocation. Its function is as follows. Component of the F(0) channel, it forms part of the peripheral stalk, linking F(1) to F(0). In Pseudothermotoga lettingae (strain ATCC BAA-301 / DSM 14385 / NBRC 107922 / TMO) (Thermotoga lettingae), this protein is ATP synthase subunit b.